A 95-amino-acid polypeptide reads, in one-letter code: MALKPLGDRIIVRFEETEEKTASGFVLAGASHETTKTAEVLAVGEGTRTLTGELIAPSVAVGDKVLVENGTGISVKDGEDYVSIIREADILAVLA.

Belongs to the GroES chaperonin family. Heptamer of 7 subunits arranged in a ring. Interacts with the chaperonin GroEL.

The protein resides in the cytoplasm. Together with the chaperonin GroEL, plays an essential role in assisting protein folding. The GroEL-GroES system forms a nano-cage that allows encapsulation of the non-native substrate proteins and provides a physical environment optimized to promote and accelerate protein folding. GroES binds to the apical surface of the GroEL ring, thereby capping the opening of the GroEL channel. This is Co-chaperonin GroES from Streptococcus thermophilus (strain ATCC BAA-491 / LMD-9).